A 555-amino-acid polypeptide reads, in one-letter code: Gamma-aminobutyric acid receptor subunit alpha-4 (555 aa).

Positions 1-35 (MVSAKKVPAIAMSFGVSFALLHFLCLAACLNESPG) are cleaved as a signal peptide. Residues 36–259 (QNQKEEKLCP…FHLRRKMGYF (224 aa)) lie on the Extracellular side of the membrane. N-linked (GlcNAc...) asparagine glycosylation occurs at Asn-47. Arg-100 lines the 4-aminobutanoate pocket. 2 N-linked (GlcNAc...) asparagine glycosylation sites follow: Asn-144 and Asn-157. Thr-163 is a 4-aminobutanoate binding site. Residues Cys-172 and Cys-186 are joined by a disulfide bond. Residues 260 to 280 (MIQTYIPCIMTVILSQVSFWI) form a helical membrane-spanning segment. Residues 281-284 (NKES) are Cytoplasmic-facing. The chain crosses the membrane as a helical span at residues 285–305 (VPARTVFGITTVLTMTTLSIS). The Extracellular segment spans residues 306 to 318 (ARHSLPKVSYATA). A helical transmembrane segment spans residues 319-341 (MDWFIAVCFAFVFSALIEFAAVN). At 342–518 (YFTNVQMEKA…PPPSGSGTSK (177 aa)) the chain is on the cytoplasmic side. Disordered regions lie at residues 354-435 (KTSK…SPNP) and 495-516 (GTSG…GSGT). Over residues 410 to 421 (SSKSSTVVQGSS) the composition is skewed to low complexity. Polar residues predominate over residues 422–435 (EATPQSYLASSPNP). Residues 519–545 (IDKYARILFPVTFGAFNMVYWVVYLSK) form a helical membrane-spanning segment. At 546-555 (DTMEKSESLM) the chain is on the extracellular side.

It belongs to the ligand-gated ion channel (TC 1.A.9) family. Gamma-aminobutyric acid receptor (TC 1.A.9.5) subfamily. GABRA4 sub-subfamily. In terms of assembly, heteropentamer, formed by a combination of alpha (GABRA1-6), beta (GABRB1-3), gamma (GABRG1-3), delta (GABRD), epsilon (GABRE), rho (GABRR1-3), pi (GABRP) and theta (GABRQ) chains, each subunit exhibiting distinct physiological and pharmacological properties. In terms of tissue distribution, expressed in the brain.

The protein localises to the cell membrane. Its subcellular location is the postsynaptic cell membrane. The enzyme catalyses chloride(in) = chloride(out). Potentiated by histamine. Functionally, alpha subunit of the heteropentameric ligand-gated chloride channel gated by gamma-aminobutyric acid (GABA), a major inhibitory neurotransmitter in the brain. GABA-gated chloride channels, also named GABA(A) receptors (GABAAR), consist of five subunits arranged around a central pore and contain GABA active binding site(s) located at the alpha and beta subunit interface(s). When activated by GABA, GABAARs selectively allow the flow of chloride anions across the cell membrane down their electrochemical gradient. GABAARs containing alpha-4 are predominantly extrasynaptic, contributing to tonic inhibition in dentate granule cells and thalamic relay neurons. Extrasynaptic alpha-4-containing GABAARs control levels of excitability and network activity. GABAARs containing alpha-4 are often found with the delta or gamma-2 subunits, in combination with beta subunits. GABAAR containing alpha-4-beta-3-delta subunits can simultaneously bind GABA and histamine where histamine binds at the interface of two neighboring beta subunits, which may be involved in the regulation of sleep and wakefulness. This Bos taurus (Bovine) protein is Gamma-aminobutyric acid receptor subunit alpha-4 (GABRA4).